The primary structure comprises 313 residues: Olfactory receptor 1M1 (313 aa).

Topologically, residues 1 to 25 (MEPQNHTSASEFILLGLSEKPDHDP) are extracellular. A glycan (N-linked (GlcNAc...) asparagine) is linked at Asn5. A helical membrane pass occupies residues 26–46 (VLFSLFLCMYMITVVGNLLII). At 47 to 54 (LAISFDSH) the chain is on the cytoplasmic side. Residues 55-75 (LHTPMYFFLANLSLVDFCLAT) form a helical membrane-spanning segment. The Extracellular portion of the chain corresponds to 76 to 97 (NTVPKMLVNIQTRNKSISYPCC). Asn89 is a glycosylation site (N-linked (GlcNAc...) asparagine). An intrachain disulfide couples Cys97 to Cys179. The helical transmembrane segment at 98-118 (LTQMYFFHFFGIMDSVLIAVM) threads the bilayer. The Cytoplasmic segment spans residues 119–142 (AYDRFVAICHPLHYSTIMSPRLCG). The chain crosses the membrane as a helical span at residues 143–163 (LLVGVPWVYSCFISLTHILLM). The Extracellular segment spans residues 164-196 (ARLVFCGKNELPHYFCDLTPLLRLSCTDTTVNK). A helical membrane pass occupies residues 197-217 (IFVLIVAGMVIATPFVCILAS). Topologically, residues 218–244 (YARIIVAIMKVPSAGGRKKAFSTCSSH) are cytoplasmic. Residues 245-265 (LSVVALFYGTTIGVYLCPSSV) form a helical membrane-spanning segment. Residues 266–274 (RTAVKEKAS) are Extracellular-facing. The helical transmembrane segment at 275 to 292 (AVMYTAVTPMLNPFIYSL) threads the bilayer. Over 293 to 313 (RNRDLKGALKKIINRKISTSS) the chain is Cytoplasmic.

The protein belongs to the G-protein coupled receptor 1 family. Expressed in testis.

It is found in the cell membrane. In terms of biological role, odorant receptor. This Mus musculus (Mouse) protein is Olfactory receptor 1M1.